Here is a 98-residue protein sequence, read N- to C-terminus: MSMVYINIFLAFILSLMGMLVYRSHLMSSLLCLEGMMLSLFVMMSVTILNNHLTLASMMPIVLLVFAACEAALGLSLLVMVSNTYGTDYVQNLNLLQC.

3 helical membrane-spanning segments follow: residues 1-21, 29-49, and 61-81; these read MSMV…GMLV, SLLC…VTIL, and IVLL…LVMV.

Belongs to the complex I subunit 4L family. In terms of assembly, core subunit of respiratory chain NADH dehydrogenase (Complex I) which is composed of 45 different subunits.

Its subcellular location is the mitochondrion inner membrane. It catalyses the reaction a ubiquinone + NADH + 5 H(+)(in) = a ubiquinol + NAD(+) + 4 H(+)(out). In terms of biological role, core subunit of the mitochondrial membrane respiratory chain NADH dehydrogenase (Complex I) which catalyzes electron transfer from NADH through the respiratory chain, using ubiquinone as an electron acceptor. Part of the enzyme membrane arm which is embedded in the lipid bilayer and involved in proton translocation. The chain is NADH-ubiquinone oxidoreductase chain 4L (MT-ND4L) from Canis latrans (Coyote).